Reading from the N-terminus, the 138-residue chain is Small ribosomal subunit protein uS11 (138 aa).

Low complexity predominate over residues 1–12 (MPPKKAAASSAK). Residues 1 to 28 (MPPKKAAASSAKKGQKTRRREKKNVPHG) form a disordered region. The segment covering 13-22 (KGQKTRRREK) has biased composition (basic residues).

This sequence belongs to the universal ribosomal protein uS11 family. In terms of assembly, part of the 30S ribosomal subunit. Interacts with proteins S7 and S18. Binds to IF-3.

Its function is as follows. Located on the platform of the 30S subunit, it bridges several disparate RNA helices of the 16S rRNA. Forms part of the Shine-Dalgarno cleft in the 70S ribosome. This is Small ribosomal subunit protein uS11 from Mycobacterium sp. (strain JLS).